Reading from the N-terminus, the 89-residue chain is DNA-binding protein HU (89 aa).

Belongs to the bacterial histone-like protein family. Homodimer. The dimer interacts with the DNA mimic protein DMP12. It also interacts with the monomeric form of the DNA mimic protein DMP19 with 1:1 stoichiometry.

With respect to regulation, activity is regulated by the DNA mimic protein DMP12. Activity is inhibited in the presence of the DNA mimic protein DMP19, which interacts with HU and prevents the binding of HU to DNA. Functionally, histone-like DNA-binding protein which is capable of wrapping DNA to stabilize it, and thus to prevent its denaturation under extreme environmental conditions. The chain is DNA-binding protein HU from Neisseria meningitidis serogroup B (strain ATCC BAA-335 / MC58).